The sequence spans 167 residues: Probable phospholipid hydroperoxide glutathione peroxidase (167 aa).

The active site involves cysteine 41.

It belongs to the glutathione peroxidase family.

It is found in the cytoplasm. The enzyme catalyses a hydroperoxy polyunsaturated fatty acid + 2 glutathione = a hydroxy polyunsaturated fatty acid + glutathione disulfide + H2O. In terms of biological role, protects cells and enzymes from oxidative damage, by catalyzing the reduction of hydrogen peroxide, lipid peroxides and organic hydroperoxide, by glutathione. This chain is Probable phospholipid hydroperoxide glutathione peroxidase (CSA), found in Citrus sinensis (Sweet orange).